Consider the following 61-residue polypeptide: Putative defensin-like protein 72 (61 aa).

4 disulfides stabilise this stretch: C21-C59, C25-C48, C34-C57, and C38-C58.

This sequence belongs to the DEFL family.

In Arabidopsis thaliana (Mouse-ear cress), this protein is Putative defensin-like protein 72.